Here is a 1012-residue protein sequence, read N- to C-terminus: Multiple C2 domain and transmembrane region protein 10 (1012 aa).

Positions 1-115 (MTEAKTGTGN…REGESVVQLY (115 aa)) constitute a C2 1 domain. The tract at residues 141–203 (ENGENVRRVN…SQQNGQGQRM (63 aa)) is disordered. The span at 148–160 (RVNRSGGSKKSKK) shows a compositional bias: basic residues. Composition is skewed to low complexity over residues 161 to 180 (VQNV…QQQQ) and 188 to 202 (RGNQ…QGQR). 3 consecutive C2 domains span residues 262–376 (SSHK…PQWY), 411–551 (KAGN…SRWF), and 585–710 (YNSD…THSY). E296, E344, N346, and E349 together coordinate Ca(2+). 3 helical membrane passes run 810 to 830 (FFRL…VEVM), 841 to 861 (VFVL…PCLL), and 952 to 972 (ATFL…TVPV).

This sequence belongs to the MCTP family. The cofactor is Ca(2+). In terms of tissue distribution, highly expressed in roots meristems, shoot apical meristems (SAMs) and in incipient leaf primordia. Observed in flowers.

It localises to the endoplasmic reticulum membrane. May function as a signaling molecule by regulating the trafficking of other regulators. This Arabidopsis thaliana (Mouse-ear cress) protein is Multiple C2 domain and transmembrane region protein 10.